A 422-amino-acid polypeptide reads, in one-letter code: Interferon-induced protein 44 (422 aa).

A TLDc domain is found at 1–147 (MAMRTRLTWQ…IQECEAFRCE (147 aa)).

Belongs to the IFI44 family.

The protein localises to the cytoplasm. This protein aggregates to form microtubular structures. In Mus musculus (Mouse), this protein is Interferon-induced protein 44 (Ifi44).